Here is a 262-residue protein sequence, read N- to C-terminus: tRNA pseudouridine synthase A (262 aa).

Catalysis depends on Asp51, which acts as the Nucleophile. Residue Tyr109 participates in substrate binding.

It belongs to the tRNA pseudouridine synthase TruA family. As to quaternary structure, homodimer.

It catalyses the reaction uridine(38/39/40) in tRNA = pseudouridine(38/39/40) in tRNA. Functionally, formation of pseudouridine at positions 38, 39 and 40 in the anticodon stem and loop of transfer RNAs. In Aliivibrio salmonicida (strain LFI1238) (Vibrio salmonicida (strain LFI1238)), this protein is tRNA pseudouridine synthase A.